We begin with the raw amino-acid sequence, 397 residues long: Elongation factor Tu (397 aa).

The region spanning 10–207 (LPHVNVGTIG…TLDSYIPEPV (198 aa)) is the tr-type G domain. Positions 19-26 (GHVDHGKT) are G1. 19 to 26 (GHVDHGKT) lines the GTP pocket. Thr26 is a binding site for Mg(2+). Residues 60–64 (GITIN) are G2. The G3 stretch occupies residues 81 to 84 (DCPG). GTP is bound by residues 81–85 (DCPGH) and 136–139 (NKAD). Residues 136-139 (NKAD) are G4. Residues 174–176 (SAR) are G5.

The protein belongs to the TRAFAC class translation factor GTPase superfamily. Classic translation factor GTPase family. EF-Tu/EF-1A subfamily. In terms of assembly, monomer.

It localises to the cytoplasm. The enzyme catalyses GTP + H2O = GDP + phosphate + H(+). Functionally, GTP hydrolase that promotes the GTP-dependent binding of aminoacyl-tRNA to the A-site of ribosomes during protein biosynthesis. The protein is Elongation factor Tu of Pseudomonas putida (strain ATCC 700007 / DSM 6899 / JCM 31910 / BCRC 17059 / LMG 24140 / F1).